The primary structure comprises 210 residues: Chaperone protein TorD (210 aa).

The protein belongs to the TorD/DmsD family. TorD subfamily.

It is found in the cytoplasm. Involved in the biogenesis of TorA. Acts on TorA before the insertion of the molybdenum cofactor and, as a result, probably favors a conformation of the apoenzyme that is competent for acquiring the cofactor. This Salmonella agona (strain SL483) protein is Chaperone protein TorD.